A 416-amino-acid polypeptide reads, in one-letter code: Tyrosine--tRNA ligase (416 aa).

Tyr39 lines the L-tyrosine pocket. Positions 44–53 (CTASSLHVGS) match the 'HIGH' region motif. The L-tyrosine site is built by Tyr176 and Gln180. A 'KMSKS' region motif is present at residues 236 to 240 (KMGKT). Lys239 is a binding site for ATP. The S4 RNA-binding domain occupies 349 to 415 (ISLIDLLHDI…GKKRHIKVMV (67 aa)).

This sequence belongs to the class-I aminoacyl-tRNA synthetase family. TyrS type 1 subfamily. Homodimer.

The protein resides in the cytoplasm. It catalyses the reaction tRNA(Tyr) + L-tyrosine + ATP = L-tyrosyl-tRNA(Tyr) + AMP + diphosphate + H(+). Its function is as follows. Catalyzes the attachment of tyrosine to tRNA(Tyr) in a two-step reaction: tyrosine is first activated by ATP to form Tyr-AMP and then transferred to the acceptor end of tRNA(Tyr). The chain is Tyrosine--tRNA ligase from Wolbachia sp. subsp. Brugia malayi (strain TRS).